Reading from the N-terminus, the 114-residue chain is Phosphoribosyl-AMP cyclohydrolase (114 aa).

Asp-76 serves as a coordination point for Mg(2+). Cys-77 contributes to the Zn(2+) binding site. Residues Asp-78 and Asp-80 each coordinate Mg(2+). Zn(2+) is bound by residues Cys-93 and Cys-100.

The protein belongs to the PRA-CH family. Homodimer. Mg(2+) serves as cofactor. It depends on Zn(2+) as a cofactor.

It is found in the cytoplasm. The catalysed reaction is 1-(5-phospho-beta-D-ribosyl)-5'-AMP + H2O = 1-(5-phospho-beta-D-ribosyl)-5-[(5-phospho-beta-D-ribosylamino)methylideneamino]imidazole-4-carboxamide. It participates in amino-acid biosynthesis; L-histidine biosynthesis; L-histidine from 5-phospho-alpha-D-ribose 1-diphosphate: step 3/9. In terms of biological role, catalyzes the hydrolysis of the adenine ring of phosphoribosyl-AMP. The protein is Phosphoribosyl-AMP cyclohydrolase of Streptococcus gordonii (strain Challis / ATCC 35105 / BCRC 15272 / CH1 / DL1 / V288).